The primary structure comprises 161 residues: MKKFAFLTALFAACYLPNAYAHALYVFAQYDGQTLSGKSYYSDMTPAAETYLEVFRSGVSDPVLTGKTDRQGVFKLSIADVPHTTLKVVVEGDEGHRASVVAAHTSAENQSGADLMLLREDIAHLKDKIYLHDILGGIGYIVGIAGLIALRNARKIKQGRI.

A signal peptide (or 21) is located at residues 1 to 23 (MKKFAFLTALFAACYLPNAYAHA). The chain crosses the membrane as a helical span at residues 129–149 (IYLHDILGGIGYIVGIAGLIA).

It is found in the membrane. This is an uncharacterized protein from Haemophilus influenzae (strain ATCC 51907 / DSM 11121 / KW20 / Rd).